A 258-amino-acid polypeptide reads, in one-letter code: Type III pantothenate kinase (258 aa).

6–13 is a binding site for ATP; sequence DVGNTQIF. 107 to 110 lines the substrate pocket; the sequence is GADR. Asp-109 acts as the Proton acceptor in catalysis. Asp-130 is a binding site for K(+). Thr-133 is an ATP binding site. Residue Thr-185 coordinates substrate.

This sequence belongs to the type III pantothenate kinase family. As to quaternary structure, homodimer. NH4(+) serves as cofactor. The cofactor is K(+).

It is found in the cytoplasm. It catalyses the reaction (R)-pantothenate + ATP = (R)-4'-phosphopantothenate + ADP + H(+). It participates in cofactor biosynthesis; coenzyme A biosynthesis; CoA from (R)-pantothenate: step 1/5. Functionally, catalyzes the phosphorylation of pantothenate (Pan), the first step in CoA biosynthesis. This chain is Type III pantothenate kinase, found in Elusimicrobium minutum (strain Pei191).